Reading from the N-terminus, the 121-residue chain is Basic phospholipase A2 homolog piratoxin-2 (121 aa).

Disulfide bonds link Cys-26-Cys-115, Cys-28-Cys-44, Cys-43-Cys-95, Cys-49-Cys-121, Cys-50-Cys-88, Cys-57-Cys-81, and Cys-75-Cys-86. The important for membrane-damaging activities in eukaryotes and bacteria; heparin-binding stretch occupies residues 105–117; that stretch reads KKYRYHLKPFCKK.

The protein belongs to the phospholipase A2 family. Group II subfamily. K49 sub-subfamily. Homodimer; non-covalently linked. Expressed by the venom gland.

Its subcellular location is the secreted. Functionally, snake venom phospholipase A2 (PLA2) homolog that lacks enzymatic activity. Shows myotoxic activity and edema-inducing activities in vivo. A model of myotoxic mechanism has been proposed: an apo Lys49-PLA2 is activated by the entrance of a hydrophobic molecule (e.g. fatty acid) at the hydrophobic channel of the protein leading to a reorientation of a monomer. This reorientation causes a transition between 'inactive' to 'active' states, causing alignment of C-terminal and membrane-docking sites (MDoS) side-by-side and putting the membrane-disruption sites (MDiS) in the same plane, exposed to solvent and in a symmetric position for both monomers. The MDoS region stabilizes the toxin on membrane by the interaction of charged residues with phospholipid head groups. Subsequently, the MDiS region destabilizes the membrane with penetration of hydrophobic residues. This insertion causes a disorganization of the membrane, allowing an uncontrolled influx of ions (i.e. calcium and sodium), and eventually triggering irreversible intracellular alterations and cell death. This chain is Basic phospholipase A2 homolog piratoxin-2, found in Bothrops pirajai (Piraja's lancehead).